A 582-amino-acid polypeptide reads, in one-letter code: Transcription factor tau subunit sfc6 (582 aa).

The segment at 1–97 (MGPKSKEYEN…SAKKQSSKGL (97 aa)) is disordered. Positions 18–39 (EDNDDDGDFVLENVMSEEDIEI) are enriched in acidic residues. Residues 63–87 (QPLTPSSSKGAGNEPKSQNSSTTRG) are compositionally biased toward polar residues. 3 WD repeats span residues 221-262 (TQFL…NFKS), 268-314 (HDWG…VKFH), and 326-369 (FNDS…ECPL).

In terms of assembly, component of the TFIIIC complex including sfc1, sfc3, sfc4, sfc6 and sfc7. The subunits are organized in two globular domains, tauA and tauB, connected by a proteolysis-sensitive and flexible linker. Interacts with sfc1, sfc3 and sfc4.

It is found in the nucleus. In terms of biological role, TFIIIC mediates tRNA and 5S RNA gene activation by binding to intragenic promoter elements. Upstream of the transcription start site, TFIIIC assembles the initiation complex TFIIIB-TFIIIC-tDNA, which is sufficient for RNA polymerase III recruitment and function. Part of the tauB domain of TFIIIC that binds boxB DNA promoter sites of tRNA and similar genes. Cooperates with sfc3 in DNA binding. Localizes to chromatin insulator sequence without recruiting RNA polymerase III and plays a role in nuclear organization. The protein is Transcription factor tau subunit sfc6 of Schizosaccharomyces pombe (strain 972 / ATCC 24843) (Fission yeast).